A 278-amino-acid polypeptide reads, in one-letter code: Thiazole synthase (278 aa).

The active-site Schiff-base intermediate with DXP is lysine 107. 1-deoxy-D-xylulose 5-phosphate-binding positions include glycine 168, 194–195, and 216–217; these read AG and AS.

Belongs to the ThiG family. As to quaternary structure, homotetramer. Forms heterodimers with either ThiH or ThiS.

It localises to the cytoplasm. The catalysed reaction is [ThiS sulfur-carrier protein]-C-terminal-Gly-aminoethanethioate + 2-iminoacetate + 1-deoxy-D-xylulose 5-phosphate = [ThiS sulfur-carrier protein]-C-terminal Gly-Gly + 2-[(2R,5Z)-2-carboxy-4-methylthiazol-5(2H)-ylidene]ethyl phosphate + 2 H2O + H(+). Its pathway is cofactor biosynthesis; thiamine diphosphate biosynthesis. In terms of biological role, catalyzes the rearrangement of 1-deoxy-D-xylulose 5-phosphate (DXP) to produce the thiazole phosphate moiety of thiamine. Sulfur is provided by the thiocarboxylate moiety of the carrier protein ThiS. In vitro, sulfur can be provided by H(2)S. This chain is Thiazole synthase, found in Corynebacterium urealyticum (strain ATCC 43042 / DSM 7109).